We begin with the raw amino-acid sequence, 798 residues long: Cadherin-20 (798 aa).

The signal sequence occupies residues 1–35 (MWTSGRMSNAKNLFGLGVSLYFWGLMDLTTTVLSG). Positions 36–58 (SARPLTEGPEDNLSDKLHQRMKR) are excised as a propeptide. Asn47 carries an N-linked (GlcNAc...) asparagine glycan. The Extracellular segment spans residues 59 to 618 (SWVWNQFFVL…AYVLPVSLSR (560 aa)). Cadherin domains are found at residues 60-164 (WVWN…EPKF), 165-273 (LDGP…PPRF), 274-392 (PQKH…EPSF), 389-493 (EPSF…APEF), and 493-615 (FARF…LPVS). The Cell attachment site signature appears at 88 to 90 (RGD). The N-linked (GlcNAc...) asparagine glycan is linked to Asn260. N-linked (GlcNAc...) asparagine glycosylation is found at Asn419, Asn460, and Asn541. Residues 619 to 639 (GALIAILACIFVLLVLVLLIL) traverse the membrane as a helical segment. Residues 640–798 (SMRRQRKQPY…GATDSSGALW (159 aa)) are Cytoplasmic-facing.

In terms of tissue distribution, detected in embryonic spinal cord, in the brachial and lumbar section of motor neurons (at protein level). Detected in ventro-lateral portion of embryonic spinal cord, in the brachial and lumbar section of embryonic motor neurons. Detected in embryonic adductor motor neurons and embryonic dorsal root ganglion. Detected in the caudal half of newly generated somites and in presomitic mesoderm.

Its subcellular location is the cell membrane. Cadherins are calcium-dependent cell adhesion proteins. They preferentially interact with themselves in a homophilic manner in connecting cells; cadherins may thus contribute to the sorting of heterogeneous cell types. This chain is Cadherin-20 (CDH20), found in Gallus gallus (Chicken).